The sequence spans 275 residues: Large ribosomal subunit protein uL2 (275 aa).

Residues 38–53 (SSKAGRNNNGRITTRH) are compositionally biased toward polar residues. 2 disordered regions span residues 38-60 (SSKA…GHKQ) and 224-257 (AMNP…KGFR).

This sequence belongs to the universal ribosomal protein uL2 family. In terms of assembly, part of the 50S ribosomal subunit. Forms a bridge to the 30S subunit in the 70S ribosome.

In terms of biological role, one of the primary rRNA binding proteins. Required for association of the 30S and 50S subunits to form the 70S ribosome, for tRNA binding and peptide bond formation. It has been suggested to have peptidyltransferase activity; this is somewhat controversial. Makes several contacts with the 16S rRNA in the 70S ribosome. In Burkholderia pseudomallei (strain 1106a), this protein is Large ribosomal subunit protein uL2.